The primary structure comprises 743 residues: NAD(P)H-quinone oxidoreductase subunit 5, chloroplastic (743 aa).

The next 16 membrane-spanning stretches (helical) occupy residues 9 to 29 (WIIP…LLFF), 40 to 60 (WAFI…DLSI), 89 to 109 (IDPL…LVLI), 125 to 145 (FAYM…SNFI), 147 to 167 (IYIF…FWFT), 185 to 205 (GDFG…SFEF), 219 to 239 (NEVN…GPVA), 258 to 278 (TPIS…FLVA), 280 to 300 (LLPL…IGII), 327 to 347 (LGYM…FHLI), 354 to 374 (ALLF…VGYF), 396 to 416 (TAFL…CFWS), 425 to 445 (WLYS…TAFY), 546 to 566 (ILFV…IGIP), 607 to 627 (LSVS…KPFY), and 721 to 741 (FYLL…FFFF).

Belongs to the complex I subunit 5 family. As to quaternary structure, NDH is composed of at least 16 different subunits, 5 of which are encoded in the nucleus.

The protein resides in the plastid. Its subcellular location is the chloroplast thylakoid membrane. It carries out the reaction a plastoquinone + NADH + (n+1) H(+)(in) = a plastoquinol + NAD(+) + n H(+)(out). The enzyme catalyses a plastoquinone + NADPH + (n+1) H(+)(in) = a plastoquinol + NADP(+) + n H(+)(out). Its function is as follows. NDH shuttles electrons from NAD(P)H:plastoquinone, via FMN and iron-sulfur (Fe-S) centers, to quinones in the photosynthetic chain and possibly in a chloroplast respiratory chain. The immediate electron acceptor for the enzyme in this species is believed to be plastoquinone. Couples the redox reaction to proton translocation, and thus conserves the redox energy in a proton gradient. This chain is NAD(P)H-quinone oxidoreductase subunit 5, chloroplastic (ndhF), found in Citrus sinensis (Sweet orange).